Reading from the N-terminus, the 153-residue chain is MGCCCCLPSIPESSRTIDEHLPLSRATPSSLSNAYSSPLSPPIPLAITNINLQTSPPKLPRTQGNSSEASPGLTQVVPEKKTWHVDDLTDFELKKQYREAIDECPICLEEYEIDNPKLLTKCGHDFHLACILAWMERSEACPVCDKELVLTES.

The RING-type; atypical zinc-finger motif lies at C104–D145.

The protein localises to the cytoplasm. Its subcellular location is the cytosol. The enzyme catalyses S-ubiquitinyl-[E2 ubiquitin-conjugating enzyme]-L-cysteine + [acceptor protein]-L-lysine = [E2 ubiquitin-conjugating enzyme]-L-cysteine + N(6)-ubiquitinyl-[acceptor protein]-L-lysine.. In terms of biological role, possesses E3 ubiquitin-protein ligase activity in vitro when associated with the E2 enzyme UBC8 in vitro. Plays combinatory roles with AIRP2 in the positive regulation of the abscisic acid-mediated drought stress response. The sequence is that of E3 ubiquitin-protein ligase AIRP1 from Arabidopsis thaliana (Mouse-ear cress).